We begin with the raw amino-acid sequence, 1242 residues long: DNA-directed RNA polymerase RPB2 homolog (1242 aa).

A C4-type zinc finger spans residues 1180–1201; the sequence is CRNCGEPAIYNASHPIYKCMNC.

This sequence belongs to the RNA polymerase beta chain family. As to quaternary structure, part of the viral DNA-directed RNA polymerase that consists of 8 polII-like subunits (RPB1, RPB2, RPB3, RPB5, RPB6, RPB7, RPB9, RPB10), a capping enzyme and a termination factor.

The protein localises to the host cytoplasm. It localises to the virion. It catalyses the reaction RNA(n) + a ribonucleoside 5'-triphosphate = RNA(n+1) + diphosphate. In terms of biological role, catalytic component of the DNA-directed RNA polymerase (RNAP) that catalyzes the transcription in the cytoplasm of viral DNA into RNA using the four ribonucleoside triphosphates as substrates. Forms the polymerase active center together with RPB1. Part of the core element with the central large cleft, the clamp element that moves to open and close the cleft and the jaws that are thought to grab the incoming DNA template. The protein is DNA-directed RNA polymerase RPB2 homolog of African swine fever virus (isolate Tick/Malawi/Lil 20-1/1983) (ASFV).